The chain runs to 471 residues: Ubiquitin carboxyl-terminal hydrolase calypso (471 aa).

The 232-residue stretch at 45 to 276 folds into the UCH catalytic domain; that stretch reads GWLELESDPG…IRFNLMAVVP (232 aa). Cys-131 functions as the Nucleophile in the catalytic mechanism. His-213 (proton donor) is an active-site residue. Coiled-coil stretches lie at residues 240-256 and 298-324; these read WEDSEDWTDKFRRVMAE and GTLQKLLKADEQGESGNGDSQRPDTPT. Positions 307 to 326 are disordered; the sequence is DEQGESGNGDSQRPDTPTTL. Positions 314-326 are enriched in polar residues; sequence NGDSQRPDTPTTL. The ULD domain maps to 375 to 403; the sequence is NYDKFICTFLSMLAHQGVLGELVSQHLLP. The segment at 405-471 is positively charged C-terminal tail required for binding nucleosomes; the sequence is KKVSGQGAAN…KGRNKCRKRK (67 aa). The segment at 412 to 471 is disordered; that stretch reads AANRISKQSTTASAGGSTAAGTASTPKTQQQQAAAAKNGKSPSKTPGRRRKGRNKCRKRK. Residues 420–447 show a composition bias toward low complexity; it reads STTASAGGSTAAGTASTPKTQQQQAAAA. Over residues 457–471 the composition is skewed to basic residues; it reads PGRRRKGRNKCRKRK.

It belongs to the peptidase C12 family. BAP1 subfamily. Catalytic component of the polycomb repressive deubiquitinase (PR-DUB) complex, at least composed of caly/calypso, Asx and sba (MBD5/6 homolog). The PR-DUB complex associates with nucleosomes to mediate deubiquitination of histone H2AK118ub1 substrates; the association requires the positively charged C-terminal tail of caly, probably due to direct binding of DNA. Interacts (via ULD domain) with Asx (via DEUBAD domain); the interaction produces a stable heterodimer with a composite binding site for ubiquitin. Homodimerizes (via coiled-coil hinge-region between the UCH and ULD domains) to mediate assembly of 2 copies of the caly-Asx heterodimer into a bisymmetric tetramer; dimerization enhances PR-DUB association with nucleosomes.

It is found in the nucleus. It carries out the reaction Thiol-dependent hydrolysis of ester, thioester, amide, peptide and isopeptide bonds formed by the C-terminal Gly of ubiquitin (a 76-residue protein attached to proteins as an intracellular targeting signal).. Catalytic component of the polycomb repressive deubiquitinase (PR-DUB) complex, a complex that specifically mediates deubiquitination of histone H2A monoubiquitinated at 'Lys-119' (H2AK118ub1). Mediates bisymmetric organization of the PR-DUB complex and is involved in association with nucleosomes to mediate deubiquitination. Does not deubiquitinate monoubiquitinated histone H2B. Required to maintain the transcriptionally repressive state of homeotic genes throughout development. The PR-DUB complex has weak or no activity toward 'Lys-48'- and 'Lys-63'-linked polyubiquitin chains. Polycomb group (PcG) protein. This is Ubiquitin carboxyl-terminal hydrolase calypso from Drosophila melanogaster (Fruit fly).